The chain runs to 485 residues: MEFLGTTQTASYCGPKKCCGLTSLPAVQAPVIQECYQPYYLPGYRYLNSWRPSLFYKIANVQTCPDESTSTLRPPTILPTLRSALFSRYSPHDWDQSNQLQVRGAEASRLWASRLTDDSMRLLQDKDQLTHQMQEGTCRNLGQRLSDIGFWKSELSYELDRLLTENQNLETVKRRLECAANEVNCPLQVALECLYHREKRIGIDLVHDNVEKNLIREVDLLKCCQEQMRKLAQRIDIQMRDNRDAQHVLERDLEDKSSAQCIDEKCFNLRNTSDCISFFHGMEKIDGTISVPETWAKFSNDNIKHSQNMRANSIQLREEAEHLFETLSDQMWRQFTDTNLAFNARISEVTDVKNKLQTQLAKTLQEIFQAENTIMLLERSIMAKEGPLKVAQTRLECRTRRPNMELCRDIPQLKLVNEVFTIDDTLQTLKLRLRETQDTLQLLVMTKCRLEHELAIKANTLCIDKEKCMGMRKTFPCTPRLVGHT.

Coiled coils occupy residues 114 to 185, 225 to 247, 307 to 385, and 421 to 444; these read RLTD…EVNC, QEQMRKLAQRIDIQMRDNRDAQH, QNMR…MAKE, and TIDDTLQTLKLRLRETQDTLQLLV.

It belongs to the tektin family. Microtubule inner protein component of sperm flagellar doublet microtubules. Interacts with TEKT3. Ubiquitinated, leading to its degradation. Deubiquitinated by USP16, promoting its stability.

Its subcellular location is the cytoplasm. It localises to the cytoskeleton. The protein localises to the flagellum axoneme. In terms of biological role, sperm-specific microtubule inner protein (MIP) part of the dynein-decorated doublet microtubules (DMTs) in flagellar axoneme. Forms an extensive interaction network in different conformations that reinforces the helix bundle composed by other tektin proteins (TEKT1 to TEKT4) and MIPs to anchor the tektin bundle onto the tubulin wall of A-tubule of the sperm flagellum. This is Tektin-5 (TEKT5) from Homo sapiens (Human).